We begin with the raw amino-acid sequence, 728 residues long: Protein psiK (728 aa).

The N-terminal stretch at 1–20 (MKKTFIFLYCVVLFISTTLA) is a signal peptide. Residues 21 to 666 (VEMKKTQDFN…FICKTAAVVS (646 aa)) lie on the Extracellular side of the membrane. Asn61, Asn74, and Asn104 each carry an N-linked (GlcNAc...) asparagine glycan. Positions 118–266 (MNLDDKSNYF…YDFCGVCTGN (149 aa)) constitute a PA14 domain. N-linked (GlcNAc...) asparagine glycosylation is found at Asn272, Asn326, Asn335, Asn438, Asn543, and Asn638. A helical membrane pass occupies residues 667–687 (VGVAVGVAVGGAIALGVFIFA). Residues 688–728 (GKKGYDYWKASQGVTMATSNANPLYESNPSGGENPIYTSPN) lie on the Cytoplasmic side of the membrane.

This sequence belongs to the prespore-cell-inducing factor family.

The protein localises to the membrane. This Dictyostelium discoideum (Social amoeba) protein is Protein psiK (psiK).